The sequence spans 379 residues: Guanine nucleotide-binding protein G(s) subunit alpha (379 aa).

The segment at 1 to 29 (MGCFGSAGAKGDAEENKKRKEANKNINKQ) is disordered. Gly-2 is lipidated: N-palmitoyl glycine. Residue Cys-3 is the site of S-palmitoyl cysteine attachment. Residues 39 to 379 (ATHRLLLLGA…RMHLRQYELL (341 aa)) form the G-alpha domain. The interval 42 to 55 (RLLLLGAGESGKST) is G1 motif. GTP-binding positions include 47–54 (GAGESGKS), 183–189 (LRCRVLT), 208–212 (DVGGQ), 277–280 (NKQD), and Ala-351. The Mg(2+) site is built by Ser-54 and Thr-189. Positions 181–189 (DILRCRVLT) are G2 motif. The segment at 204–213 (FHMFDVGGQR) is G3 motif. A G4 motif region spans residues 273 to 280 (ILFLNKQD). The tract at residues 349-354 (TCAVDT) is G5 motif.

This sequence belongs to the G-alpha family. G(s) subfamily. As to quaternary structure, g proteins are composed of 3 units; alpha, beta and gamma. The alpha chain contains the guanine nucleotide binding site.

Its function is as follows. Guanine nucleotide-binding proteins (G proteins) are involved as modulators or transducers in various transmembrane signaling systems. The G(s) protein is involved in hormonal regulation of adenylate cyclase: it activates the cyclase in response to beta-adrenergic stimuli. This is Guanine nucleotide-binding protein G(s) subunit alpha from Homarus americanus (American lobster).